The sequence spans 280 residues: Large ribosomal subunit protein uL2 (280 aa).

2 disordered regions span residues 1–59 (MAIR…GGHK) and 223–280 (GVVM…NKKR). Basic residues-rich tracts occupy residues 45–59 (VHGH…GGHK) and 269–280 (VRRRRSNKNKKR).

The protein belongs to the universal ribosomal protein uL2 family. In terms of assembly, part of the 50S ribosomal subunit. Forms a bridge to the 30S subunit in the 70S ribosome.

Functionally, one of the primary rRNA binding proteins. Required for association of the 30S and 50S subunits to form the 70S ribosome, for tRNA binding and peptide bond formation. It has been suggested to have peptidyltransferase activity; this is somewhat controversial. Makes several contacts with the 16S rRNA in the 70S ribosome. The chain is Large ribosomal subunit protein uL2 from Corynebacterium jeikeium (strain K411).